Here is a 301-residue protein sequence, read N- to C-terminus: Transcription factor bHLH103 (301 aa).

The KRAB domain occupies 29-106 (PRSAEIVVDF…LEGLFDSSEQ (78 aa)). 2 disordered regions span residues 161 to 184 (EKSG…ETPS) and 239 to 272 (TSPH…PRQD). The bHLH domain occupies 180 to 229 (LETPSHFPSFKVRKEKLGDRITALQQLVSPFGKTDTASVLHDAIDYIKFL). Over residues 239-269 (TSPHLNSIGSGEQKQWSDKSSNNTHNQNCSP) the composition is skewed to polar residues.

Homodimer. Mature root endodermis.

The protein resides in the nucleus. The polypeptide is Transcription factor bHLH103 (BHLH103) (Arabidopsis thaliana (Mouse-ear cress)).